The primary structure comprises 199 residues: Holliday junction branch migration complex subunit RuvA (199 aa).

The segment at 1-65 (MIGWLHGQII…EDALLLYGFL (65 aa)) is domain I. The domain II stretch occupies residues 66–144 (DKEERSLFRS…QFDGSVSDTF (79 aa)). The tract at residues 144–148 (FQKQA) is flexible linker. A domain III region spans residues 149–199 (GSTHSQQEAISALEALGYKPQEAWKVMNKIDNGNKSCEQLIREALQILSSR).

This sequence belongs to the RuvA family. Homotetramer. Forms an RuvA(8)-RuvB(12)-Holliday junction (HJ) complex. HJ DNA is sandwiched between 2 RuvA tetramers; dsDNA enters through RuvA and exits via RuvB. An RuvB hexamer assembles on each DNA strand where it exits the tetramer. Each RuvB hexamer is contacted by two RuvA subunits (via domain III) on 2 adjacent RuvB subunits; this complex drives branch migration. In the full resolvosome a probable DNA-RuvA(4)-RuvB(12)-RuvC(2) complex forms which resolves the HJ.

Its subcellular location is the cytoplasm. The RuvA-RuvB-RuvC complex processes Holliday junction (HJ) DNA during genetic recombination and DNA repair, while the RuvA-RuvB complex plays an important role in the rescue of blocked DNA replication forks via replication fork reversal (RFR). RuvA specifically binds to HJ cruciform DNA, conferring on it an open structure. The RuvB hexamer acts as an ATP-dependent pump, pulling dsDNA into and through the RuvAB complex. HJ branch migration allows RuvC to scan DNA until it finds its consensus sequence, where it cleaves and resolves the cruciform DNA. This Legionella pneumophila subsp. pneumophila (strain Philadelphia 1 / ATCC 33152 / DSM 7513) protein is Holliday junction branch migration complex subunit RuvA.